The following is a 248-amino-acid chain: Flavodoxin/ferredoxin--NADP reductase (248 aa).

Residues 2–101 enclose the FAD-binding FR-type domain; it reads ADWVTGKVTK…SEAAGFFVLD (100 aa). Residue aspartate 17 coordinates NADP(+). FAD-binding positions include 50–53, tyrosine 66, 74–76, and threonine 116; these read RAYS and KLS. Residues 143 to 144, 173 to 174, arginine 184, 214 to 216, and aspartate 220 each bind NADP(+); these read AR, SR, and NPQ. Position 247-248 (247-248) interacts with FAD; sequence YW.

Belongs to the ferredoxin--NADP reductase type 1 family. Monomer. FAD serves as cofactor.

It localises to the cytoplasm. It catalyses the reaction 2 reduced [2Fe-2S]-[ferredoxin] + NADP(+) + H(+) = 2 oxidized [2Fe-2S]-[ferredoxin] + NADPH. It carries out the reaction reduced [flavodoxin] + NADP(+) = oxidized [flavodoxin] + NADPH + 2 H(+). Functionally, transports electrons between flavodoxin or ferredoxin and NADPH. Reduces flavodoxin 1, flavodoxin 2 and ferredoxin, ferredoxin being the kinetically and thermodynamically preferred partner. Required for the activation of several enzymes such as pyruvate formate-lyase, anaerobic ribonucleotide reductase and cobalamin-dependent methionine synthase. This chain is Flavodoxin/ferredoxin--NADP reductase, found in Escherichia coli (strain K12).